Consider the following 556-residue polypeptide: MSSTTAGLIFLAVLVAALVAVHVPLGDYMFRVYTTDRDLATERTIYRLIGVDARSEQTWGAYARGVLAFSSVSIIFLFVLQLVQGKLPLHLHDPATKMTPSLAWNTAVSFVTNTNWQAYSGETTQGHLVQMAGLAVQNFVSAAVGMAVAVALVRGFARRRTGELGNFWVDLVRGTLRILLPISIVGAVLLVAGGAIQNFHLHDQVVTTLGGTAQTIPGGPVASQEVIKELATNGGGFYNANSAHPFENPTAWTNWLEVFLILVIGFSLPRTFGRMVGNPKQGYAIASVMASLYLLSTGFMLWFQLQHHGTVPSAVGAAMEGVEQRFGVPDSGVFAAATTLTSTGAVDSAHDSLTSLGGMITMFNMQLGEVAPGGTGSGLYGMLVLAVITVFVAGLMVGRTPEYLGKKINPREIKLAASYFLVTPLIVLTGTAIAMALPGERAGMANSGPHGLSEVLYAFTSAANNNGSAFAGLSANTEWYNTALGLAMAFGRFLPIVLVLALAGSLARQGSTPDSAGTLPTHRPQFVGMVAGVTLIVVALTFLPMLALGPLAEGIH.

10 helical membrane passes run 6–26 (AGLI…VPLG), 65–85 (GVLA…LVQG), 133–153 (GLAV…VALV), 176–196 (LRIL…GGAI), 249–269 (PTAW…FSLP), 283–303 (YAIA…MLWF), 378–398 (GLYG…LMVG), 419–439 (YFLV…ALPG), 483–503 (ALGL…LALA), and 526–546 (FVGM…LPML).

This sequence belongs to the KdpA family. The system is composed of three essential subunits: KdpA, KdpB and KdpC.

The protein resides in the cell membrane. Part of the high-affinity ATP-driven potassium transport (or Kdp) system, which catalyzes the hydrolysis of ATP coupled with the electrogenic transport of potassium into the cytoplasm. This subunit binds the extracellular potassium ions and delivers the ions to the membrane domain of KdpB through an intramembrane tunnel. The sequence is that of Potassium-transporting ATPase potassium-binding subunit from Mycolicibacterium paratuberculosis (strain ATCC BAA-968 / K-10) (Mycobacterium paratuberculosis).